A 186-amino-acid polypeptide reads, in one-letter code: Peptidyl-tRNA hydrolase (186 aa).

Tyrosine 14 provides a ligand contact to tRNA. Residue histidine 19 is the Proton acceptor of the active site. The tRNA site is built by tyrosine 64, asparagine 66, and asparagine 112.

The protein belongs to the PTH family. Monomer.

The protein localises to the cytoplasm. The enzyme catalyses an N-acyl-L-alpha-aminoacyl-tRNA + H2O = an N-acyl-L-amino acid + a tRNA + H(+). In terms of biological role, hydrolyzes ribosome-free peptidyl-tRNAs (with 1 or more amino acids incorporated), which drop off the ribosome during protein synthesis, or as a result of ribosome stalling. Functionally, catalyzes the release of premature peptidyl moieties from peptidyl-tRNA molecules trapped in stalled 50S ribosomal subunits, and thus maintains levels of free tRNAs and 50S ribosomes. This is Peptidyl-tRNA hydrolase from Bacillus anthracis.